The sequence spans 627 residues: uncharacterized protein (627 aa).

Over 1-32 the chain is Extracellular; it reads MVDDSNYLTPHETALAVVATAMKKARLQLDTL. Residues 33 to 53 traverse the membrane as a helical segment; the sequence is LINSILGGVLFSSGSFLLVAV. Residues 54-66 lie on the Cytoplasmic side of the membrane; that stretch reads YSEDPDIVARNPG. Residues 67 to 87 traverse the membrane as a helical segment; the sequence is IVNLITGVNFAMGLFYVVMMG. Topologically, residues 88 to 113 are extracellular; that stretch reads ADLFNSNILFFSVGVLRKAVTIYDLM. The helical transmembrane segment at 114 to 134 threads the bilayer; sequence ISWVVSWLGNIAGSLFVSYLF. Residues 135 to 165 are Cytoplasmic-facing; sequence GHLSGISSQKLWIIGSRQIIEQKVSYSFVQT. The chain crosses the membrane as a helical span at residues 166–186; the sequence is FLKGIACNFFVCLAIYLQLMA. At 187 to 192 the chain is on the extracellular side; it reads KPIHVK. Residues 193-213 form a helical membrane-spanning segment; that stretch reads FILMSFPIIDFIGIGFTHVVG. Residues 214–218 are Cytoplasmic-facing; that stretch reads DMSAS. The chain crosses the membrane as a helical span at residues 219–239; that stretch reads FIAMLNGANVSVGKYIWKLLI. Over 240 to 245 the chain is Extracellular; it reads PASLGN. The helical transmembrane segment at 246–266 threads the bilayer; sequence IVGGLFFSAVVPFYLHLVVVE. Topologically, residues 267–627 are cytoplasmic; sequence RDRKRLSLPE…FYNRHTSPQL (361 aa). Phosphothreonine is present on threonine 305. The tract at residues 512–537 is disordered; it reads PPILPRTTQDTFPHNAPASSPAYTDD. The span at 517–533 shows a compositional bias: polar residues; that stretch reads RTTQDTFPHNAPASSPA. Position 546 is a phosphoserine (serine 546). At threonine 588 the chain carries Phosphothreonine. Basic and acidic residues predominate over residues 605 to 614; that stretch reads STTRRQKITE. The segment at 605–627 is disordered; that stretch reads STTRRQKITEPKNFYNRHTSPQL.

It belongs to the FNT transporter (TC 1.A.16) family.

It is found in the membrane. This is an uncharacterized protein from Saccharomyces cerevisiae (strain ATCC 204508 / S288c) (Baker's yeast).